The primary structure comprises 426 residues: Phosphomethylpyrimidine synthase (426 aa).

Substrate contacts are provided by residues asparagine 66, methionine 95, tyrosine 124, histidine 163, 185–187 (SRG), 226–229 (DGLR), and glutamate 265. Residue histidine 269 participates in Zn(2+) binding. Tyrosine 292 is a substrate binding site. Zn(2+) is bound at residue histidine 333. [4Fe-4S] cluster is bound by residues cysteine 407, cysteine 410, and cysteine 414.

This sequence belongs to the ThiC family. Requires [4Fe-4S] cluster as cofactor.

It carries out the reaction 5-amino-1-(5-phospho-beta-D-ribosyl)imidazole + S-adenosyl-L-methionine = 4-amino-2-methyl-5-(phosphooxymethyl)pyrimidine + CO + 5'-deoxyadenosine + formate + L-methionine + 3 H(+). The protein operates within cofactor biosynthesis; thiamine diphosphate biosynthesis. Catalyzes the synthesis of the hydroxymethylpyrimidine phosphate (HMP-P) moiety of thiamine from aminoimidazole ribotide (AIR) in a radical S-adenosyl-L-methionine (SAM)-dependent reaction. The protein is Phosphomethylpyrimidine synthase of Thermococcus gammatolerans (strain DSM 15229 / JCM 11827 / EJ3).